A 219-amino-acid chain; its full sequence is Protein-L-isoaspartate O-methyltransferase (219 aa).

Serine 60 is an active-site residue.

It belongs to the methyltransferase superfamily. L-isoaspartyl/D-aspartyl protein methyltransferase family.

The protein resides in the cytoplasm. The enzyme catalyses [protein]-L-isoaspartate + S-adenosyl-L-methionine = [protein]-L-isoaspartate alpha-methyl ester + S-adenosyl-L-homocysteine. Functionally, catalyzes the methyl esterification of L-isoaspartyl residues in peptides and proteins that result from spontaneous decomposition of normal L-aspartyl and L-asparaginyl residues. It plays a role in the repair and/or degradation of damaged proteins. This Rhodospirillum rubrum (strain ATCC 11170 / ATH 1.1.1 / DSM 467 / LMG 4362 / NCIMB 8255 / S1) protein is Protein-L-isoaspartate O-methyltransferase.